Here is a 212-residue protein sequence, read N- to C-terminus: KxDL motif-containing protein CG10681 (212 aa).

Residues 128 to 159 are disordered; that stretch reads RSSLAEEAEDDTEAQAKKTAETPAPAAAKPVL. Residues 148–157 are compositionally biased toward low complexity; it reads ETPAPAAAKP.

This sequence belongs to the KXD1 family.

The sequence is that of KxDL motif-containing protein CG10681 from Drosophila melanogaster (Fruit fly).